The sequence spans 258 residues: Ubiquinone/menaquinone biosynthesis C-methyltransferase UbiE (258 aa).

Residues threonine 81, aspartate 102, and 130 to 131 each bind S-adenosyl-L-methionine; that span reads NA.

Belongs to the class I-like SAM-binding methyltransferase superfamily. MenG/UbiE family.

It catalyses the reaction a 2-demethylmenaquinol + S-adenosyl-L-methionine = a menaquinol + S-adenosyl-L-homocysteine + H(+). It carries out the reaction a 2-methoxy-6-(all-trans-polyprenyl)benzene-1,4-diol + S-adenosyl-L-methionine = a 5-methoxy-2-methyl-3-(all-trans-polyprenyl)benzene-1,4-diol + S-adenosyl-L-homocysteine + H(+). It functions in the pathway quinol/quinone metabolism; menaquinone biosynthesis; menaquinol from 1,4-dihydroxy-2-naphthoate: step 2/2. Its pathway is cofactor biosynthesis; ubiquinone biosynthesis. Methyltransferase required for the conversion of demethylmenaquinol (DMKH2) to menaquinol (MKH2) and the conversion of 2-polyprenyl-6-methoxy-1,4-benzoquinol (DDMQH2) to 2-polyprenyl-3-methyl-6-methoxy-1,4-benzoquinol (DMQH2). This chain is Ubiquinone/menaquinone biosynthesis C-methyltransferase UbiE, found in Sinorhizobium fredii (strain NBRC 101917 / NGR234).